The chain runs to 259 residues: (3R)-3-hydroxyacyl-CoA dehydrogenase (259 aa).

Residues L13–I21 and D40–L41 each bind NAD(+). S58 is modified (phosphoserine). A72–V74 contacts NAD(+). S154 serves as a coordination point for substrate. K158 carries the N6-succinyllysine modification. Residue Y167 is the Proton acceptor of the active site. Residues Y167–K171 and I200–T202 contribute to the NAD(+) site. K171 is subject to N6-succinyllysine.

The protein belongs to the short-chain dehydrogenases/reductases (SDR) family. In terms of assembly, heterotetramer with CBR4; contains two molecules of HSD17B8 and CBR4.

Its subcellular location is the mitochondrion matrix. It catalyses the reaction a (3R)-3-hydroxyacyl-CoA + NAD(+) = a 3-oxoacyl-CoA + NADH + H(+). The catalysed reaction is 17beta-estradiol + NAD(+) = estrone + NADH + H(+). The enzyme catalyses testosterone + NAD(+) = androst-4-ene-3,17-dione + NADH + H(+). It carries out the reaction 17beta-hydroxy-5alpha-androstan-3-one + NAD(+) = 5alpha-androstan-3,17-dione + NADH + H(+). The protein operates within steroid biosynthesis; estrogen biosynthesis. It functions in the pathway lipid metabolism; fatty acid biosynthesis. It participates in lipid metabolism; mitochondrial fatty acid beta-oxidation. Its function is as follows. Required for the solubility and assembly of the heterotetramer 3-ketoacyl-[acyl carrier protein] (ACP) reductase functional complex (KAR or KAR1) that forms part of the mitochondrial fatty acid synthase (mtFAS). Alpha-subunit of the KAR complex that acts as scaffold protein required for the stability of carbonyl reductase type-4 (CBR4, beta-subunit of the KAR complex) and for its 3-ketoacyl-ACP reductase activity, thereby participating in mitochondrial fatty acid biosynthesis. Catalyzes the NAD-dependent conversion of (3R)-3-hydroxyacyl-CoA into 3-ketoacyl-CoA (3-oxoacyl-CoA) with no chain length preference; this enzymatic activity is not needed for the KAR function. Prefers (3R)-3-hydroxyacyl-CoA over (3S)-3-hydroxyacyl-CoA and displays enzymatic activity only in the presence of NAD(+). Cooperates with enoyl-CoA hydratase 1 in mitochondria, together they constitute an alternative route to the auxiliary enzyme pathways for the breakdown of Z-PUFA (cis polyunsaturated fatty acid) enoyl-esters. NAD-dependent 17-beta-hydroxysteroid dehydrogenase with highest activity towards estradiol (17beta-estradiol or E2). Has very low activity towards testosterone and dihydrotestosterone (17beta-hydroxy-5alpha-androstan-3-one). Primarily an oxidative enzyme, it can switch to a reductive mode determined in the appropriate physiologic milieu and catalyze the reduction of estrone (E1) to form biologically active 17beta-estradiol. In Canis lupus familiaris (Dog), this protein is (3R)-3-hydroxyacyl-CoA dehydrogenase (HSD17B8).